The following is a 214-amino-acid chain: Adenylate kinase (214 aa).

10-15 lines the ATP pocket; the sequence is GAGKGT. The NMP stretch occupies residues 30-59; sequence STGDMLRAAVKAGSELGKQAKAIMDAGKLV. AMP-binding positions include T31, R36, 57–59, 85–88, and Q92; these read KLV and GFPR. The interval 122–159 is LID; it reads GRRVHPGSGRVYHVKFNPPQVEGKDDVTGEDLMTRKDD. Residues R123 and 132–133 contribute to the ATP site; that span reads VY. 2 residues coordinate AMP: R156 and R167. Residue Q200 coordinates ATP.

It belongs to the adenylate kinase family. Monomer.

The protein localises to the cytoplasm. It carries out the reaction AMP + ATP = 2 ADP. The protein operates within purine metabolism; AMP biosynthesis via salvage pathway; AMP from ADP: step 1/1. In terms of biological role, catalyzes the reversible transfer of the terminal phosphate group between ATP and AMP. Plays an important role in cellular energy homeostasis and in adenine nucleotide metabolism. The chain is Adenylate kinase from Edwardsiella ictaluri (strain 93-146).